A 298-amino-acid polypeptide reads, in one-letter code: MSSSPSRNPTNAEAPPPPPTSTDAVAEGSSKKVRKPYTITKSRESWTEEEHDKFLEALQLFDRDWKKIEDFVGSKTVIQIRSHAQKYFLKVQKNGTLAHVPPPRPKRKAAHPYPQKASKNAQMPLQVSTSFTTTRNGDMPGYASWDDASMLLNRVISPQHELATLRGAEADIGSKGLLNVSSPSTSGMGSSSRTVSGSEIVRKAKQPPVLHGVPDFAEVYNFIGSVFDPETRGHVEKLKEMDPINFETVLLLMRNLTVNLSNPDLESTRKVLLSYDNVTTELPSVVSLVKNSTSDKSA.

The segment at 1-44 (MSSSPSRNPTNAEAPPPPPTSTDAVAEGSSKKVRKPYTITKSRE) is disordered. Residues 38-92 (TITKSRESWTEEEHDKFLEALQLFDRDWKKIEDFVGSKTVIQIRSHAQKYFLKVQ) form the HTH myb-type domain. A DNA-binding region (H-T-H motif) is located at residues 65-88 (WKKIEDFVGSKTVIQIRSHAQKYF). Residues 96–123 (TLAHVPPPRPKRKAAHPYPQKASKNAQM) form a disordered region.

The protein resides in the nucleus. In terms of biological role, transcriptional activator of evening element (EE)-containing clock-controlled genes. Forms a negative feedback loop with APRR5. Regulates the pattern of histone H3 acetylation of the TOC1 promoter. RVE4, RVE6 and RVE8 are components of the circadian system acting synergistically to regulate flowering time, redundantly to regulate leaf growth, and antagonistically to regulate hypocotyl elongation; their action seems independent of ZTL and HY5. In Arabidopsis thaliana (Mouse-ear cress), this protein is Protein REVEILLE 8.